Reading from the N-terminus, the 704-residue chain is Phosphate acetyltransferase (704 aa).

The interval 379–704 (AFRYQVVQRA…AIQADAQAPA (326 aa)) is phosphate acetyltransferase.

It in the N-terminal section; belongs to the CobB/CobQ family. The protein in the C-terminal section; belongs to the phosphate acetyltransferase and butyryltransferase family. In terms of assembly, homohexamer.

It localises to the cytoplasm. It catalyses the reaction acetyl-CoA + phosphate = acetyl phosphate + CoA. It functions in the pathway metabolic intermediate biosynthesis; acetyl-CoA biosynthesis; acetyl-CoA from acetate: step 2/2. With respect to regulation, activity is increased under anaerobic growth conditions. Involved in acetate metabolism. In combination with LdhA and AckA, allows fermentation of pyruvate, enhancing long-term survival under anaerobic conditions. The polypeptide is Phosphate acetyltransferase (pta) (Pseudomonas aeruginosa (strain ATCC 15692 / DSM 22644 / CIP 104116 / JCM 14847 / LMG 12228 / 1C / PRS 101 / PAO1)).